Reading from the N-terminus, the 376-residue chain is Alpha-ketoglutarate-dependent dioxygenase esdpJ (376 aa).

Fe cation contacts are provided by His-145 and Asp-147. 2-oxoglutarate is bound at residue Thr-202. Residues 234–260 form a disordered region; the sequence is YNQSSQEKKSEIHVEPRGSPNNVGSDL. Residues 239–249 are compositionally biased toward basic and acidic residues; it reads QEKKSEIHVEP. His-335 contacts Fe cation. Residues Arg-347 and Arg-351 each coordinate 2-oxoglutarate. The disordered stretch occupies residues 354–376; it reads GVGEQPYLDPESKTRREALGEFN. Residues 363-376 are compositionally biased toward basic and acidic residues; sequence PESKTRREALGEFN.

It belongs to the TfdA dioxygenase family. The cofactor is Fe(2+).

Alpha-ketoglutarate-dependent dioxygenas; part of the cluster that mediates the biosynthesis of shearones, diterpenoid pyrones (DPs) which are structurally diverse meroterpenoids consisting of a diterpene linked by a pyrone, and which may exhibit a range of bioactivities. The alpha-ketoglutarate-dependent dioxygenase esdpJ seems not to be involved in this pathway. The molecular scaffold is commonly biosynthesized by a series of enzymes including the non-reducing polyketide synthase (NR-PKS) esdpA that generates an alpha-pyrone; the prenyltransferase esdpC that attaches a geranylgeranyl pyrophosphate (GGPP) produced by the GGPP synthase (GGPPS) esdpD onto the pyrone unit; the FAD-dependent monooxygenase esdpE that converts an olefin on the diterpene unit into an epoxide; and the terpene cyclase esdpB that catalyzes the cyclization reactions to give the molecular backbone shearone A. In the modification steps, esdpF oxidizes the hydroxy group to a ketone at C-3 and esdpG then attaches hydroxy groups at both C-11 and C-12. After that, esdpI hydroxylates at C-20 and esdpH hydroxylates at C-6'. The ether bridge is generated by nucleophilic attack of the hydroxy group at C-20 to the carbonyl carbon at C-3. EsdpH can also functions prior to esdpI. The different combinations of these modification enzymes lead to the production of diverse shearone derivatives, shearone I being the end product of the pathway. In Penicillium shearii (Eupenicillium shearii), this protein is Alpha-ketoglutarate-dependent dioxygenase esdpJ.